Here is a 397-residue protein sequence, read N- to C-terminus: 4-hydroxybenzoate polyprenyltransferase, mitochondrial (397 aa).

The transit peptide at 1–14 (MFAVRHLLKSRKHF) directs the protein to the mitochondrion. 9 helical membrane-spanning segments follow: residues 96-116 (IGTY…ADAG), 121-141 (LTML…GCTI), 169-189 (FDAI…LVQL), 190-210 (NWQS…YPLM), 213-233 (VTYW…LLGW), 242-262 (LAAC…YDTI), 289-309 (VWLS…GWAC), 313-333 (LPYY…IYSL), and 345-365 (FLSN…GTLL).

It belongs to the UbiA prenyltransferase family. The cofactor is Mg(2+).

The protein localises to the mitochondrion inner membrane. It catalyses the reaction an all-trans-polyprenyl diphosphate + 4-hydroxybenzoate = a 4-hydroxy-3-(all-trans-polyprenyl)benzoate + diphosphate. It participates in cofactor biosynthesis; ubiquinone biosynthesis. Functionally, catalyzes the prenylation of para-hydroxybenzoate (PHB) with an all-trans polyprenyl group. Mediates the second step in the final reaction sequence of coenzyme Q (CoQ) biosynthesis, which is the condensation of the polyisoprenoid side chain with PHB, generating the first membrane-bound Q intermediate. This Drosophila pseudoobscura pseudoobscura (Fruit fly) protein is 4-hydroxybenzoate polyprenyltransferase, mitochondrial.